We begin with the raw amino-acid sequence, 501 residues long: Probable cytosol aminopeptidase (501 aa).

Lys268 and Asp273 together coordinate Mn(2+). The active site involves Lys280. Mn(2+) is bound by residues Asp291, Asp350, and Glu352. Arg354 is a catalytic residue.

It belongs to the peptidase M17 family. Mn(2+) serves as cofactor.

The protein resides in the cytoplasm. It catalyses the reaction Release of an N-terminal amino acid, Xaa-|-Yaa-, in which Xaa is preferably Leu, but may be other amino acids including Pro although not Arg or Lys, and Yaa may be Pro. Amino acid amides and methyl esters are also readily hydrolyzed, but rates on arylamides are exceedingly low.. It carries out the reaction Release of an N-terminal amino acid, preferentially leucine, but not glutamic or aspartic acids.. Functionally, presumably involved in the processing and regular turnover of intracellular proteins. Catalyzes the removal of unsubstituted N-terminal amino acids from various peptides. This is Probable cytosol aminopeptidase from Colwellia psychrerythraea (strain 34H / ATCC BAA-681) (Vibrio psychroerythus).